The following is a 722-amino-acid chain: Probable carboxypeptidase X1 (722 aa).

An N-terminal signal peptide occupies residues 1 to 20; sequence MWGLLLAVTAFAPSVGLGLG. Residues 30–54 are disordered; sequence APGSTLAPHSSVAQPSTKANETSER. The segment covering 36 to 49 has biased composition (polar residues); it reads APHSSVAQPSTKAN. Asparagine 49, asparagine 200, asparagine 210, and asparagine 307 each carry an N-linked (GlcNAc...) asparagine glycan. In terms of domain architecture, F5/8 type C spans 103-263; the sequence is PGCPPLGLES…PCLRAEILAC (161 aa). Cysteine 105 and cysteine 263 are disulfide-bonded. The Peptidase M14 domain maps to 287–610; the sequence is RHHNYKAMRK…DALLTYLEQV (324 aa). Positions 349 and 352 each coordinate Zn(2+). Residue asparagine 461 is glycosylated (N-linked (GlcNAc...) asparagine). Residue histidine 487 coordinates Zn(2+). Glutamate 580 functions as the Proton donor/acceptor in the catalytic mechanism.

It belongs to the peptidase M14 family. The cofactor is Zn(2+). As to expression, strongly expressed in testis and spleen. Moderately expressed in salivary gland, brain, heart, lung, and kidney. Extremely low expression in liver and muscle. No expression in eye, adrenal, and white adipose tissues.

The protein resides in the secreted. In terms of biological role, may be involved in cell-cell interactions. No carboxypeptidase activity was found yet. The polypeptide is Probable carboxypeptidase X1 (Cpxm1) (Mus musculus (Mouse)).